Here is a 57-residue protein sequence, read N- to C-terminus: Peptide BmKa1 (57 aa).

The signal sequence occupies residues 1–22 (MKPRVFFLLFLLVAAMIETGES). 2 stretches are compositionally biased toward acidic residues: residues 20 to 29 (GESEENEEGS) and 45 to 57 (VDNE…GDSD). The tract at residues 20-57 (GESEENEEGSNESGKSTEAKNTDASVDNEDSDIDGDSD) is disordered.

This sequence belongs to the non-disulfide-bridged peptide (NDBP) superfamily. In terms of tissue distribution, expressed by the venom gland.

It localises to the secreted. This Olivierus martensii (Manchurian scorpion) protein is Peptide BmKa1.